We begin with the raw amino-acid sequence, 479 residues long: Glycogen synthase (479 aa).

Lys-15 provides a ligand contact to ADP-alpha-D-glucose.

This sequence belongs to the glycosyltransferase 1 family. Bacterial/plant glycogen synthase subfamily.

It carries out the reaction [(1-&gt;4)-alpha-D-glucosyl](n) + ADP-alpha-D-glucose = [(1-&gt;4)-alpha-D-glucosyl](n+1) + ADP + H(+). Its pathway is glycan biosynthesis; glycogen biosynthesis. Synthesizes alpha-1,4-glucan chains using ADP-glucose. This Nostoc punctiforme (strain ATCC 29133 / PCC 73102) protein is Glycogen synthase.